The chain runs to 280 residues: Soluble inorganic pyrophosphatase 1, chloroplastic (280 aa).

Residue arginine 120 participates in diphosphate binding. Mg(2+) is bound by residues aspartate 152, aspartate 157, and aspartate 189.

As to quaternary structure, monomer. The cofactor is Mg(2+). The N-terminus is blocked.

The protein localises to the plastid. It localises to the chloroplast. The catalysed reaction is diphosphate + H2O = 2 phosphate + H(+). The sequence is that of Soluble inorganic pyrophosphatase 1, chloroplastic (ppa1) from Chlamydomonas reinhardtii (Chlamydomonas smithii).